The sequence spans 235 residues: Claudin-16 (235 aa).

The Cytoplasmic segment spans residues Met-1 to Asp-3. The chain crosses the membrane as a helical span at residues Leu-4–Thr-24. Residues Arg-25 to Arg-79 lie on the Extracellular side of the membrane. The chain crosses the membrane as a helical span at residues Ala-80–Leu-100. At Asp-101 to Arg-115 the chain is on the cytoplasmic side. A helical transmembrane segment spans residues Leu-116–Val-136. Over Trp-137–Gly-169 the chain is Extracellular. A helical transmembrane segment spans residues Met-170–Phe-190. Residues Lys-191–Val-235 are Cytoplasmic-facing. The Interaction with TJP1 motif lies at Thr-233–Val-235.

This sequence belongs to the claudin family. As to quaternary structure, can form heteropolymeric tight junction strands with other claudins. Interacts with CLDN19. Interacts (via PDZ-binding motif TRV) with TJP1 (via PDZ domain). Cannot form tight junction strands on its own.

It localises to the cell junction. The protein resides in the tight junction. It is found in the cell membrane. The enzyme catalyses Mg(2+)(in) = Mg(2+)(out). It catalyses the reaction Ca(2+)(in) = Ca(2+)(out). It carries out the reaction Na(+)(in) = Na(+)(out). The catalysed reaction is K(+)(in) = K(+)(out). The enzyme catalyses Rb(+)(in) = Rb(+)(out). It catalyses the reaction Cs(+)(in) = Cs(+)(out). It carries out the reaction Li(+)(in) = Li(+)(out). Forms paracellular channels: coassembles with CLDN19 into tight junction strands with cation-selective channels through the strands, conveying epithelial permeability in a process known as paracellular tight junction permeability. Involved in the maintenance of ion gradients along the nephron. In the thick ascending limb (TAL) of Henle's loop, facilitates sodium paracellular permeability from the interstitial compartment to the lumen, contributing to the lumen-positive transepithelial potential that drives paracellular magnesium and calcium reabsorption. This Rattus norvegicus (Rat) protein is Claudin-16.